A 338-amino-acid polypeptide reads, in one-letter code: Glycerol-3-phosphate dehydrogenase [NAD(P)+] (338 aa).

Ser13, Trp14, and Lys108 together coordinate NADPH. 3 residues coordinate sn-glycerol 3-phosphate: Lys108, Gly139, and Ser141. Ala143 is an NADPH binding site. Residues Lys194, Asp247, Ser257, Arg258, and Asn259 each contribute to the sn-glycerol 3-phosphate site. The active-site Proton acceptor is Lys194. Arg258 contacts NADPH. Residues Val282 and Glu284 each contribute to the NADPH site.

This sequence belongs to the NAD-dependent glycerol-3-phosphate dehydrogenase family.

Its subcellular location is the cytoplasm. The catalysed reaction is sn-glycerol 3-phosphate + NAD(+) = dihydroxyacetone phosphate + NADH + H(+). The enzyme catalyses sn-glycerol 3-phosphate + NADP(+) = dihydroxyacetone phosphate + NADPH + H(+). It participates in membrane lipid metabolism; glycerophospholipid metabolism. Catalyzes the reduction of the glycolytic intermediate dihydroxyacetone phosphate (DHAP) to sn-glycerol 3-phosphate (G3P), the key precursor for phospholipid synthesis. This is Glycerol-3-phosphate dehydrogenase [NAD(P)+] from Streptococcus agalactiae serotype V (strain ATCC BAA-611 / 2603 V/R).